The following is a 309-amino-acid chain: Histidine protein methyltransferase 1 homolog (309 aa).

2 disordered regions span residues 1-37 and 79-111; these read MSFK…FDSS and KPFK…NNKD. Residues 25–37 show a composition bias toward basic and acidic residues; sequence EESKLDISEFDSS. Low complexity predominate over residues 84–109; that stretch reads NQDNNNDNNVNSNDKNDNNNNNNNNN. Residues 132 to 136, G159, 179 to 181, 209 to 211, and S229 each bind S-adenosyl-L-methionine; these read LWECS, QDY, and GDW.

This sequence belongs to the methyltransferase superfamily. METTL18 family.

It localises to the cytoplasm. Its subcellular location is the cytosol. The protein localises to the nucleus. The protein resides in the nucleolus. The catalysed reaction is L-histidyl-[protein] + S-adenosyl-L-methionine = N(tele)-methyl-L-histidyl-[protein] + S-adenosyl-L-homocysteine + H(+). Functionally, protein-L-histidine N-tele-methyltransferase that probably monomethylates RPL3. Through the methylation of RPL3 may regulate the dynamics of pre-rRNA processing, ribosome biogenesis, and translation. This Dictyostelium discoideum (Social amoeba) protein is Histidine protein methyltransferase 1 homolog.